The following is a 255-amino-acid chain: 5'-methylthioadenosine/S-adenosylhomocysteine nucleosidase (255 aa).

The active-site Proton acceptor is E14. Substrate contacts are provided by residues G80, L176, and 196 to 197; that span reads ME. The active-site Proton donor is the D220.

This sequence belongs to the PNP/UDP phosphorylase family. MtnN subfamily.

The enzyme catalyses S-adenosyl-L-homocysteine + H2O = S-(5-deoxy-D-ribos-5-yl)-L-homocysteine + adenine. It catalyses the reaction S-methyl-5'-thioadenosine + H2O = 5-(methylsulfanyl)-D-ribose + adenine. The catalysed reaction is 5'-deoxyadenosine + H2O = 5-deoxy-D-ribose + adenine. It participates in amino-acid biosynthesis; L-methionine biosynthesis via salvage pathway; S-methyl-5-thio-alpha-D-ribose 1-phosphate from S-methyl-5'-thioadenosine (hydrolase route): step 1/2. Functionally, catalyzes the irreversible cleavage of the glycosidic bond in both 5'-methylthioadenosine (MTA) and S-adenosylhomocysteine (SAH/AdoHcy) to adenine and the corresponding thioribose, 5'-methylthioribose and S-ribosylhomocysteine, respectively. Also cleaves 5'-deoxyadenosine, a toxic by-product of radical S-adenosylmethionine (SAM) enzymes, into 5-deoxyribose and adenine. The sequence is that of 5'-methylthioadenosine/S-adenosylhomocysteine nucleosidase (mtnN) from Mycobacterium bovis (strain ATCC BAA-935 / AF2122/97).